The primary structure comprises 510 residues: Inositol-3-phosphate synthase (510 aa).

NAD(+) contacts are provided by Gly-70, Gly-71, Asn-72, Asn-73, Asp-143, Ile-180, Gln-190, Arg-193, Thr-230, Ala-231, Asn-232, Thr-233, Gly-281, Ser-282, Asp-306, Ser-309, Asn-340, Asn-341, Asp-342, Lys-355, Gly-393, Asp-394, Asp-422, and Ser-423.

The protein belongs to the myo-inositol 1-phosphate synthase family. NAD(+) serves as cofactor.

Its subcellular location is the cytoplasm. The protein resides in the cytosol. The protein localises to the nucleus. It carries out the reaction D-glucose 6-phosphate = 1D-myo-inositol 3-phosphate. The protein operates within polyol metabolism; myo-inositol biosynthesis; myo-inositol from D-glucose 6-phosphate: step 1/2. Key enzyme in myo-inositol biosynthesis pathway that catalyzes the conversion of glucose 6-phosphate to 1-myo-inositol 1-phosphate in a NAD-dependent manner. The sequence is that of Inositol-3-phosphate synthase from Hordeum vulgare (Barley).